The primary structure comprises 209 residues: Phosphopantothenoylcysteine decarboxylase (209 aa).

Residues 28–30 (GSV) and 53–55 (TKS) contribute to the FMN site. The active-site Proton donor is histidine 90. Residues 106–109 (SANT) and alanine 140 each bind FMN. The N-[(R)-4-phosphopantothenoyl]-L-cysteine site is built by asparagine 142, arginine 172, and alanine 174. Cysteine 175 acts as the Proton donor in catalysis. N-[(R)-4-phosphopantothenoyl]-L-cysteine is bound at residue methionine 183.

This sequence belongs to the HFCD (homooligomeric flavin containing Cys decarboxylase) superfamily. In terms of assembly, homotrimer. FMN serves as cofactor. In terms of tissue distribution, expressed in roots, shoots, leaves, flowers, developing siliques and seeds with highest expression in seed embryos and phloem.

It carries out the reaction N-[(R)-4-phosphopantothenoyl]-L-cysteine + H(+) = (R)-4'-phosphopantetheine + CO2. It functions in the pathway cofactor biosynthesis; coenzyme A biosynthesis; CoA from (R)-pantothenate: step 3/5. Functionally, involved in plant growth, and salt and osmotic tolerance. Catalyzes the decarboxylation of 4'-phosphopantothenoylcysteine to 4'-phosphopantetheine, a key step in coenzyme A biosynthesis. The enzyme is also able to decarboxylate pantothenoylcysteine to pantothenoylcysteamine. The polypeptide is Phosphopantothenoylcysteine decarboxylase (Arabidopsis thaliana (Mouse-ear cress)).